An 843-amino-acid chain; its full sequence is Protein P (843 aa).

Residues 1–177 are terminal protein domain (TP); that stretch reads MPLSYQHFRK…FCGSPYSWEQ (177 aa). The tract at residues 178 to 346 is spacer; that stretch reads ELQHGRLVFQ…YCLTHIVNLL (169 aa). Disordered regions lie at residues 224-273 and 288-316; these read GLQP…SSTS and HLSTSKRQSSSGHAVELHNIPPSSARSQS. Positions 288–299 are enriched in polar residues; that stretch reads HLSTSKRQSSSG. Positions 347–690 are polymerase/reverse transcriptase domain (RT); it reads EDWGPCTEHG…YLNLYPVARQ (344 aa). Positions 357–600 constitute a Reverse transcriptase domain; it reads EHNIRIPRTP…YSLNFMGYVI (244 aa). Mg(2+)-binding residues include aspartate 429, aspartate 551, and aspartate 552.

The protein belongs to the hepadnaviridae P protein family.

The catalysed reaction is DNA(n) + a 2'-deoxyribonucleoside 5'-triphosphate = DNA(n+1) + diphosphate. It catalyses the reaction Endonucleolytic cleavage to 5'-phosphomonoester.. Its activity is regulated as follows. Activated by host HSP70 and HSP40 in vitro to be able to bind the epsilon loop of the pgRNA. Because deletion of the RNase H region renders the protein partly chaperone-independent, the chaperones may be needed indirectly to relieve occlusion of the RNA-binding site by this domain. Inhibited by several reverse-transcriptase inhibitors: Lamivudine, Adefovir and Entecavir. Its function is as follows. Multifunctional enzyme that converts the viral RNA genome into dsDNA in viral cytoplasmic capsids. This enzyme displays a DNA polymerase activity that can copy either DNA or RNA templates, and a ribonuclease H (RNase H) activity that cleaves the RNA strand of RNA-DNA heteroduplexes in a partially processive 3'- to 5'-endonucleasic mode. Neo-synthesized pregenomic RNA (pgRNA) are encapsidated together with the P protein, and reverse-transcribed inside the nucleocapsid. Initiation of reverse-transcription occurs first by binding the epsilon loop on the pgRNA genome, and is initiated by protein priming, thereby the 5'-end of (-)DNA is covalently linked to P protein. Partial (+)DNA is synthesized from the (-)DNA template and generates the relaxed circular DNA (RC-DNA) genome. After budding and infection, the RC-DNA migrates in the nucleus, and is converted into a plasmid-like covalently closed circular DNA (cccDNA). The activity of P protein does not seem to be necessary for cccDNA generation, and is presumably released from (+)DNA by host nuclear DNA repair machinery. The sequence is that of Protein P from Homo sapiens (Human).